The following is a 420-amino-acid chain: Phosphoglycerate kinase, cytosolic (420 aa).

12 residues coordinate (2R)-3-phosphoglycerate: Val-23, Asp-24, Phe-25, Asn-26, Arg-39, Ser-61, His-62, Gly-64, Arg-65, Arg-135, His-171, and Arg-172. Gly-217 provides a ligand contact to ADP. Residue Gly-217 participates in CDP binding. Lys-219 lines the (2R)-3-phosphoglycerate pocket. An AMP-binding site is contributed by Lys-219. Asp-222 is a CDP binding site. Asp-222 serves as a coordination point for Mg(2+). ADP is bound by residues Lys-223 and Gly-241. Lys-223 provides a ligand contact to AMP. Lys-223 contacts ATP. Gly-241 contributes to the CDP binding site. AMP is bound by residues Ala-242 and Ala-314. The ATP site is built by Ala-242 and Ala-314. Positions 314 and 338 each coordinate ADP. Positions 339 and 344 each coordinate CDP. Phe-344, Glu-345, Asp-377, and Ser-378 together coordinate ADP. Glu-345 serves as a coordination point for AMP. 3 residues coordinate ATP: Glu-345, Asp-377, and Ser-378. Asp-377 serves as a coordination point for Mg(2+).

Belongs to the phosphoglycerate kinase family. Monomer. Requires Mg(2+) as cofactor.

The protein localises to the cytoplasm. It catalyses the reaction (2R)-3-phosphoglycerate + ATP = (2R)-3-phospho-glyceroyl phosphate + ADP. It participates in carbohydrate degradation; glycolysis; pyruvate from D-glyceraldehyde 3-phosphate: step 2/5. In Trypanosoma congolense, this protein is Phosphoglycerate kinase, cytosolic (C1PGK).